The following is a 60-amino-acid chain: UPF0434 protein YcaR (60 aa).

The protein belongs to the UPF0434 family.

This chain is UPF0434 protein YcaR, found in Escherichia coli O81 (strain ED1a).